We begin with the raw amino-acid sequence, 627 residues long: Zinc cluster transcription factor acuM (627 aa).

Disordered stretches follow at residues 1–40 (MGCR…PARP), 129–148 (NGTA…GTME), 155–193 (AEGD…RRKV), 225–258 (CHDE…FSNA), 277–305 (PDGT…QNSL), and 394–416 (AQPS…PSST). Polar residues predominate over residues 162–171 (MESGSKNTAS). Positions 197 to 225 (CVYCRRSHMTCDSERPCTRCIKRNIGHLC) form a DNA-binding region, zn(2)-C6 fungal-type. Residues 225 to 251 (CHDEPREPSKRARSEHEHSTAEEDGHS) show a composition bias toward basic and acidic residues. Residues 286–305 (SSVSAVQHNTIPSSSAQNSL) show a composition bias toward polar residues. Over residues 394-403 (AQPSQPTQSQ) the composition is skewed to low complexity. A compositionally biased stretch (polar residues) spans 404–416 (PHQNDSVQGPSST).

The protein localises to the nucleus. Its function is as follows. Transcription factor that governs genes involved in reductive and siderophore-mediated iron acquisition, and carbon metabolism. Suppresses the expression of sreA and induces hapX to stimulate expression of genes involved in both reductive iron assimilation and siderophore-mediated iron uptake which is essential for the maximal virulence. Also regulates genes involved in gluconeogenesis. The protein is Zinc cluster transcription factor acuM of Aspergillus fumigatus (strain ATCC MYA-4609 / CBS 101355 / FGSC A1100 / Af293) (Neosartorya fumigata).